A 445-amino-acid chain; its full sequence is Phosphoglucosamine mutase (445 aa).

The active-site Phosphoserine intermediate is Ser-101. The Mg(2+) site is built by Ser-101, Asp-240, Asp-242, and Asp-244. The residue at position 101 (Ser-101) is a Phosphoserine.

It belongs to the phosphohexose mutase family. It depends on Mg(2+) as a cofactor. Post-translationally, activated by phosphorylation.

The catalysed reaction is alpha-D-glucosamine 1-phosphate = D-glucosamine 6-phosphate. Functionally, catalyzes the conversion of glucosamine-6-phosphate to glucosamine-1-phosphate. The sequence is that of Phosphoglucosamine mutase from Pseudomonas fluorescens (strain ATCC BAA-477 / NRRL B-23932 / Pf-5).